We begin with the raw amino-acid sequence, 426 residues long: D-tagatose-1,6-bisphosphate aldolase subunit KbaZ (426 aa).

It belongs to the GatZ/KbaZ family. KbaZ subfamily. In terms of assembly, forms a complex with KbaY.

The protein operates within carbohydrate metabolism; D-tagatose 6-phosphate degradation; D-glyceraldehyde 3-phosphate and glycerone phosphate from D-tagatose 6-phosphate: step 2/2. In terms of biological role, component of the tagatose-1,6-bisphosphate aldolase KbaYZ that is required for full activity and stability of the Y subunit. Could have a chaperone-like function for the proper and stable folding of KbaY. When expressed alone, KbaZ does not show any aldolase activity. The sequence is that of D-tagatose-1,6-bisphosphate aldolase subunit KbaZ from Escherichia fergusonii (strain ATCC 35469 / DSM 13698 / CCUG 18766 / IAM 14443 / JCM 21226 / LMG 7866 / NBRC 102419 / NCTC 12128 / CDC 0568-73).